The chain runs to 244 residues: 5'-deoxynucleotidase (244 aa).

The enzyme catalyses a 2'-deoxyribonucleoside 5'-phosphate + H2O = a 2'-deoxyribonucleoside + phosphate. In terms of biological role, following host DNA degradation, is responsible for the degradation of 5'-dNMP's to deoxynucleosides that can be further excreted. Active on deoxynucleoside 5'-monophosphates but not active as a phosphatase on ribonucleotides, deoxynucleoside 5'-triphosphates, deoxynucleoside 3'-monophosphates, or deoxyoligonucleotides. The polypeptide is 5'-deoxynucleotidase (dmp) (Escherichia coli (Enterobacteria phage T5)).